A 233-amino-acid polypeptide reads, in one-letter code: 2,3,4,5-tetrahydropyridine-2,6-dicarboxylate N-acetyltransferase (233 aa).

It belongs to the transferase hexapeptide repeat family. DapH subfamily.

It carries out the reaction (S)-2,3,4,5-tetrahydrodipicolinate + acetyl-CoA + H2O = L-2-acetamido-6-oxoheptanedioate + CoA. The protein operates within amino-acid biosynthesis; L-lysine biosynthesis via DAP pathway; LL-2,6-diaminopimelate from (S)-tetrahydrodipicolinate (acetylase route): step 1/3. Its function is as follows. Catalyzes the transfer of an acetyl group from acetyl-CoA to tetrahydrodipicolinate. This Petrotoga mobilis (strain DSM 10674 / SJ95) protein is 2,3,4,5-tetrahydropyridine-2,6-dicarboxylate N-acetyltransferase.